The primary structure comprises 513 residues: Noroxomaritidine synthase 1 (513 aa).

Residues 18 to 34 (ILIAIACLVVFSLLRSA) traverse the membrane as a helical segment. Cysteine 458 is a heme binding site.

The protein belongs to the cytochrome P450 family. The cofactor is heme. Mostly expressed in stems, and, to a lower extent, in bulbs, roots, leaves and flowers.

Its subcellular location is the membrane. It carries out the reaction 4'-O-methylnorbelladine + reduced [NADPH--hemoprotein reductase] + O2 = (10bR,4aS)-noroxomaritidine + oxidized [NADPH--hemoprotein reductase] + 2 H2O + H(+). The enzyme catalyses 4'-O-methylnorbelladine + reduced [NADPH--hemoprotein reductase] + O2 = (10bS,4aR)-noroxomaritidine + oxidized [NADPH--hemoprotein reductase] + 2 H2O + H(+). It functions in the pathway alkaloid biosynthesis. In terms of biological role, cytochrome P450 that catalyzes an intramolecular para-para' C-C phenol coupling of 4'-O-methylnorbelladine in alkaloids biosynthesis, including haemanthamine- and crinamine-type alkaloids, promising anticancer agents. Catalyzes the formation of (10bR,4aS)-noroxomaritidine and (10bS,4aR)-noroxomaritidine from 4'-O-methylnorbelladine. In Narcissus pseudonarcissus (Daffodil), this protein is Noroxomaritidine synthase 1.